Reading from the N-terminus, the 295-residue chain is 4-hydroxy-tetrahydrodipicolinate synthase (295 aa).

Residue threonine 46 coordinates pyruvate. The Proton donor/acceptor role is filled by tyrosine 134. Residue lysine 162 is the Schiff-base intermediate with substrate of the active site. Isoleucine 205 is a binding site for pyruvate.

This sequence belongs to the DapA family. In terms of assembly, homotetramer; dimer of dimers.

Its subcellular location is the cytoplasm. The catalysed reaction is L-aspartate 4-semialdehyde + pyruvate = (2S,4S)-4-hydroxy-2,3,4,5-tetrahydrodipicolinate + H2O + H(+). It participates in amino-acid biosynthesis; L-lysine biosynthesis via DAP pathway; (S)-tetrahydrodipicolinate from L-aspartate: step 3/4. Catalyzes the condensation of (S)-aspartate-beta-semialdehyde [(S)-ASA] and pyruvate to 4-hydroxy-tetrahydrodipicolinate (HTPA). The chain is 4-hydroxy-tetrahydrodipicolinate synthase from Anaeromyxobacter sp. (strain K).